Reading from the N-terminus, the 220-residue chain is Iron-sulfur flavoprotein AF_1436 (220 aa).

[4Fe-4S] cluster contacts are provided by cysteine 47, cysteine 50, cysteine 53, and cysteine 59.

Belongs to the SsuE family. Isf subfamily. Homodimer. The cofactor is FMN. [4Fe-4S] cluster is required as a cofactor.

Its function is as follows. Redox-active protein probably involved in electron transport. In Archaeoglobus fulgidus (strain ATCC 49558 / DSM 4304 / JCM 9628 / NBRC 100126 / VC-16), this protein is Iron-sulfur flavoprotein AF_1436.